Consider the following 156-residue polypeptide: Cyanate hydratase (156 aa).

Catalysis depends on residues Arg96, Glu99, and Ser122.

It belongs to the cyanase family.

The catalysed reaction is cyanate + hydrogencarbonate + 3 H(+) = NH4(+) + 2 CO2. Catalyzes the reaction of cyanate with bicarbonate to produce ammonia and carbon dioxide. This Escherichia coli (strain ATCC 8739 / DSM 1576 / NBRC 3972 / NCIMB 8545 / WDCM 00012 / Crooks) protein is Cyanate hydratase.